Here is a 286-residue protein sequence, read N- to C-terminus: Ribosomal RNA small subunit methyltransferase A (286 aa).

Residues Asn-33, Val-35, Gly-60, Glu-81, Asp-111, and Asn-129 each coordinate S-adenosyl-L-methionine.

Belongs to the class I-like SAM-binding methyltransferase superfamily. rRNA adenine N(6)-methyltransferase family. RsmA subfamily.

Its subcellular location is the cytoplasm. The enzyme catalyses adenosine(1518)/adenosine(1519) in 16S rRNA + 4 S-adenosyl-L-methionine = N(6)-dimethyladenosine(1518)/N(6)-dimethyladenosine(1519) in 16S rRNA + 4 S-adenosyl-L-homocysteine + 4 H(+). Specifically dimethylates two adjacent adenosines (A1518 and A1519) in the loop of a conserved hairpin near the 3'-end of 16S rRNA in the 30S particle. May play a critical role in biogenesis of 30S subunits. This is Ribosomal RNA small subunit methyltransferase A from Streptomyces coelicolor (strain ATCC BAA-471 / A3(2) / M145).